We begin with the raw amino-acid sequence, 330 residues long: 7,8-didemethyl-8-hydroxy-5-deazariboflavin synthase (330 aa).

Residues 5–245 form the Radical SAM core domain; it reads VTFSRNVFIP…SDVAVQVAPN (241 aa). Residues Cys19, Cys23, and Cys26 each contribute to the [4Fe-4S] cluster site.

The protein belongs to the radical SAM superfamily. CofG family. In terms of assembly, consists of two subunits, CofG and CofH. The cofactor is [4Fe-4S] cluster.

The catalysed reaction is 5-amino-5-(4-hydroxybenzyl)-6-(D-ribitylimino)-5,6-dihydrouracil + S-adenosyl-L-methionine = 7,8-didemethyl-8-hydroxy-5-deazariboflavin + 5'-deoxyadenosine + L-methionine + NH4(+) + H(+). It functions in the pathway cofactor biosynthesis; coenzyme F0 biosynthesis. Functionally, catalyzes the radical-mediated synthesis of 7,8-didemethyl-8-hydroxy-5-deazariboflavin from 5-amino-5-(4-hydroxybenzyl)-6-(D-ribitylimino)-5,6-dihydrouracil. This chain is 7,8-didemethyl-8-hydroxy-5-deazariboflavin synthase, found in Methanococcoides burtonii (strain DSM 6242 / NBRC 107633 / OCM 468 / ACE-M).